A 222-amino-acid polypeptide reads, in one-letter code: MADS-box transcription factor 26 (222 aa).

An MADS-box domain is found at 1 to 61 (MARGKVQLRR…GKLYDLATTG (61 aa)). In terms of domain architecture, K-box spans 85 to 176 (RMDPKQEAMV…QEKIVEQNGL (92 aa)).

Its subcellular location is the nucleus. Its function is as follows. Probable transcription factor. The chain is MADS-box transcription factor 26 (MADS26) from Oryza sativa subsp. indica (Rice).